The chain runs to 335 residues: Serine protease 42 (335 aa).

A signal peptide spans 1-24 (MASGGGSLGLIVFLLLLQPKPCEA). An N-linked (GlcNAc...) asparagine glycan is attached at N67. The region spanning 79–315 (IMGGVDAEEG…YSKWLIAVVN (237 aa)) is the Peptidase S1 domain. An intrachain disulfide couples C104 to C120. H119 acts as the Charge relay system in catalysis. Residue N140 is glycosylated (N-linked (GlcNAc...) asparagine). Catalysis depends on D165, which acts as the Charge relay system. A glycan (N-linked (GlcNAc...) asparagine) is linked at N176. Intrachain disulfides connect C199–C273, C232–C253, and C263–C291. The active-site Charge relay system is S267.

It belongs to the peptidase S1 family. Testis-specific. Mainly detected in round spermatids at all the eminiferous epithelial stages (at protein level).

Its subcellular location is the cytoplasm. The protein localises to the cell membrane. Plays a role in spermatogenesis. Involved in germ cell survival during meiosis. Lacks protease activity in vitro. This is Serine protease 42 from Mus musculus (Mouse).